Consider the following 115-residue polypeptide: U3-lycotoxin-Ls1r (115 aa).

The signal sequence occupies residues Met-1 to Ala-20. A propeptide spanning residues Glu-21–Arg-44 is cleaved from the precursor. Intrachain disulfides connect Cys-48/Cys-63, Cys-55/Cys-72, Cys-62/Cys-87, and Cys-74/Cys-85.

It belongs to the neurotoxin 19 (CSTX) family. 01 subfamily. Expressed by the venom gland.

It is found in the secreted. In Lycosa singoriensis (Wolf spider), this protein is U3-lycotoxin-Ls1r.